The chain runs to 269 residues: Protein LNK3 (269 aa).

Interacts with REV8.

In terms of biological role, probable transcriptional coactivator. This Arabidopsis thaliana (Mouse-ear cress) protein is Protein LNK3.